A 258-amino-acid chain; its full sequence is Thiamine thiazole synthase (258 aa).

Residues S36, 55 to 56 (ER), G63, I127, and 153 to 155 (HVD) each bind NAD(+). Fe cation contacts are provided by D155 and H170. Position 224 (M224) interacts with NAD(+). Residue R234 coordinates glycine.

It belongs to the THI4 family. In terms of assembly, homooctamer; tetramer of dimers. The cofactor is Fe(2+).

It catalyses the reaction hydrogen sulfide + glycine + NAD(+) = ADP-5-ethyl-4-methylthiazole-2-carboxylate + nicotinamide + 3 H2O + H(+). The protein operates within cofactor biosynthesis; thiamine diphosphate biosynthesis. Functionally, involved in the biosynthesis of the thiazole moiety of thiamine. Catalyzes the conversion of NAD and glycine to adenosine diphosphate 5-(2-hydroxyethyl)-4-methylthiazole-2-carboxylate (ADT), an adenylated thiazole intermediate, using free sulfide as a source of sulfur. The polypeptide is Thiamine thiazole synthase (Methanothermobacter thermautotrophicus (strain ATCC 29096 / DSM 1053 / JCM 10044 / NBRC 100330 / Delta H) (Methanobacterium thermoautotrophicum)).